Consider the following 426-residue polypeptide: Putative nickel insertion protein (426 aa).

Belongs to the LarC family.

This chain is Putative nickel insertion protein, found in Nostoc sp. (strain PCC 7120 / SAG 25.82 / UTEX 2576).